Consider the following 132-residue polypeptide: Small ribosomal subunit protein uS8c (132 aa).

This sequence belongs to the universal ribosomal protein uS8 family. Part of the 30S ribosomal subunit.

It is found in the plastid. It localises to the chloroplast. In terms of biological role, one of the primary rRNA binding proteins, it binds directly to 16S rRNA central domain where it helps coordinate assembly of the platform of the 30S subunit. The sequence is that of Small ribosomal subunit protein uS8c (rps8) from Huperzia lucidula (Shining clubmoss).